Here is a 495-residue protein sequence, read N- to C-terminus: Probable cytosol aminopeptidase (495 aa).

2 residues coordinate Mn(2+): Lys-267 and Asp-272. Residue Lys-279 is part of the active site. The Mn(2+) site is built by Asp-290, Asp-349, and Glu-351. Residue Arg-353 is part of the active site.

The protein belongs to the peptidase M17 family. Mn(2+) serves as cofactor.

It is found in the cytoplasm. It carries out the reaction Release of an N-terminal amino acid, Xaa-|-Yaa-, in which Xaa is preferably Leu, but may be other amino acids including Pro although not Arg or Lys, and Yaa may be Pro. Amino acid amides and methyl esters are also readily hydrolyzed, but rates on arylamides are exceedingly low.. It catalyses the reaction Release of an N-terminal amino acid, preferentially leucine, but not glutamic or aspartic acids.. Presumably involved in the processing and regular turnover of intracellular proteins. Catalyzes the removal of unsubstituted N-terminal amino acids from various peptides. This is Probable cytosol aminopeptidase from Histophilus somni (strain 2336) (Haemophilus somnus).